A 198-amino-acid chain; its full sequence is Ras-related protein RabH (198 aa).

14–21 (GDWNVGKS) is a binding site for GTP. Positions 36-44 (TKLSMGEHF) match the Effector region motif. Residues 62–66 (DTSGM) and 120–123 (SKFD) contribute to the GTP site. At cysteine 195 the chain carries Cysteine methyl ester. Cysteine 195 carries S-geranylgeranyl cysteine lipidation. Residues 196-198 (SIN) constitute a propeptide, removed in mature form.

Belongs to the small GTPase superfamily. Rab family.

Its subcellular location is the cell membrane. The chain is Ras-related protein RabH (rabH) from Dictyostelium discoideum (Social amoeba).